Here is a 141-residue protein sequence, read N- to C-terminus: VLSAADKGNVKAAWDKVGGQAGEYGAEALERMFLSFPTTKTYFPHFDLAHGSAQVKGHGKKVADALTNAVGHMDDLPGALSALSDLHAYKLRVDPVNFKLLSHCLLVTLASHHPAEFTPAIHASLDKFFASVSTVLTSKYR.

The Globin domain occupies 1–141 (VLSAADKGNV…VSTVLTSKYR (141 aa)). S3 is modified (phosphoserine). N6-succinyllysine occurs at positions 7 and 11. K16 carries the N6-acetyllysine; alternate modification. An N6-succinyllysine; alternate modification is found at K16. Y24 carries the post-translational modification Phosphotyrosine. S35 carries the phosphoserine modification. At K40 the chain carries N6-succinyllysine. An O2-binding site is contributed by H58. Heme b is bound at residue H87. S102 is modified (phosphoserine). T108 carries the phosphothreonine modification. Phosphoserine occurs at positions 124 and 131. Phosphothreonine is present on residues T134 and T137. S138 is modified (phosphoserine).

Belongs to the globin family. In terms of assembly, heterotetramer of two alpha chains and two beta chains. Red blood cells.

Its function is as follows. Involved in oxygen transport from the lung to the various peripheral tissues. Hemopressin acts as an antagonist peptide of the cannabinoid receptor CNR1. Hemopressin-binding efficiently blocks cannabinoid receptor CNR1 and subsequent signaling. In Macrotus californicus (Californian leaf-nosed bat), this protein is Hemoglobin subunit alpha (HBA).